The chain runs to 76 residues: Defensin-like protein 164 (76 aa).

Residues 1–25 form the signal peptide; that stretch reads MAKLLCSYLFICMFVLSGFLVFSSA. 4 disulfide bridges follow: C31–C76, C41–C61, C46–C70, and C50–C72.

This sequence belongs to the DEFL family.

It is found in the secreted. The polypeptide is Defensin-like protein 164 (LCR38) (Arabidopsis thaliana (Mouse-ear cress)).